A 244-amino-acid chain; its full sequence is Pyridoxine 5'-phosphate synthase (244 aa).

Asn-12 is a 3-amino-2-oxopropyl phosphate binding site. 14 to 15 (DH) provides a ligand contact to 1-deoxy-D-xylulose 5-phosphate. 3-amino-2-oxopropyl phosphate is bound at residue Arg-23. The active-site Proton acceptor is the His-48. Residues Arg-50 and His-55 each contribute to the 1-deoxy-D-xylulose 5-phosphate site. Residue Glu-75 is the Proton acceptor of the active site. 1-deoxy-D-xylulose 5-phosphate is bound at residue Thr-105. Catalysis depends on His-196, which acts as the Proton donor. 3-amino-2-oxopropyl phosphate-binding positions include Gly-197 and 218–219 (GH).

It belongs to the PNP synthase family. In terms of assembly, homooctamer; tetramer of dimers.

The protein localises to the cytoplasm. The enzyme catalyses 3-amino-2-oxopropyl phosphate + 1-deoxy-D-xylulose 5-phosphate = pyridoxine 5'-phosphate + phosphate + 2 H2O + H(+). It functions in the pathway cofactor biosynthesis; pyridoxine 5'-phosphate biosynthesis; pyridoxine 5'-phosphate from D-erythrose 4-phosphate: step 5/5. Functionally, catalyzes the complicated ring closure reaction between the two acyclic compounds 1-deoxy-D-xylulose-5-phosphate (DXP) and 3-amino-2-oxopropyl phosphate (1-amino-acetone-3-phosphate or AAP) to form pyridoxine 5'-phosphate (PNP) and inorganic phosphate. This is Pyridoxine 5'-phosphate synthase from Alcanivorax borkumensis (strain ATCC 700651 / DSM 11573 / NCIMB 13689 / SK2).